The following is a 456-amino-acid chain: MRSPSLAVAATTVLGLFSSSALAYYGNTTTVALTTTEFVTTCPYPTTFTVSTCTNDVCQPTVVTVTEETTITIPGTVVCPVVSTPSGSASASASAGASSEEEGSVVTTQVTVTDFTTYCPYPTTLTITKCENNECHPTTIPVETATTVTVTGEVICPTTTSTSPKESSSEAASSEVITTQVTVTDYTTYCPLPTTIVVSTCDEEKCHPTTIEVSTPTTVVVPGTVVCPTTSVATPSQSEVATKPTTINSVVTTGVTTTDYTTYCPSPTTIVVSTCDEEKCHPTTIEVSTPTTVVVPGTVVHPSTSATIITTTAEQPPASPEVSTIESVVTTPATLTGYTTYCPEPTTIVLTTCSDDQCKPHTVSATGGETVSIPATIVVPSSHTTQVEITVSSASVPASEKPTTPVTVAAVSSSPAVSTETPSLVTPAISIAGAAAVNVVPTTAFGLFAIILASIF.

A signal peptide spans 1–23 (MRSPSLAVAATTVLGLFSSSALA). N27 carries N-linked (GlcNAc...) asparagine glycosylation. G433 is lipidated: GPI-anchor amidated glycine. The propeptide at 434-456 (AAAVNVVPTTAFGLFAIILASIF) is removed in mature form.

Post-translationally, the GPI-anchor is attached to the protein in the endoplasmic reticulum and serves to target the protein to the cell surface. There, the glucosamine-inositol phospholipid moiety is cleaved off and the GPI-modified mannoprotein is covalently attached via its lipidless GPI glycan remnant to the 1,6-beta-glucan of the outer cell wall layer.

It localises to the secreted. It is found in the cell wall. The protein localises to the membrane. In terms of biological role, cell wall protein which contributes to cell wall synthesis and is important for acquiring normal surface properties. Required for virulence in a mouse infection model. This Candida albicans (strain SC5314 / ATCC MYA-2876) (Yeast) protein is GPI-anchored protein 13 (PGA13).